The following is a 477-amino-acid chain: Bifunctional protein HldE (477 aa).

The interval 1 to 318 is ribokinase; that stretch reads MKVNLPAFER…ENAVRGRADT (318 aa). Residue 195–198 participates in ATP binding; the sequence is NLSE. The active site involves Asp264. Residues 344–477 form a cytidylyltransferase region; sequence MTNGVFDILH…IKKIQTESEK (134 aa).

It in the N-terminal section; belongs to the carbohydrate kinase PfkB family. In the C-terminal section; belongs to the cytidylyltransferase family. As to quaternary structure, homodimer.

The enzyme catalyses D-glycero-beta-D-manno-heptose 7-phosphate + ATP = D-glycero-beta-D-manno-heptose 1,7-bisphosphate + ADP + H(+). It carries out the reaction D-glycero-beta-D-manno-heptose 1-phosphate + ATP + H(+) = ADP-D-glycero-beta-D-manno-heptose + diphosphate. It functions in the pathway nucleotide-sugar biosynthesis; ADP-L-glycero-beta-D-manno-heptose biosynthesis; ADP-L-glycero-beta-D-manno-heptose from D-glycero-beta-D-manno-heptose 7-phosphate: step 1/4. Its pathway is nucleotide-sugar biosynthesis; ADP-L-glycero-beta-D-manno-heptose biosynthesis; ADP-L-glycero-beta-D-manno-heptose from D-glycero-beta-D-manno-heptose 7-phosphate: step 3/4. Functionally, catalyzes the phosphorylation of D-glycero-D-manno-heptose 7-phosphate at the C-1 position to selectively form D-glycero-beta-D-manno-heptose-1,7-bisphosphate. Its function is as follows. Catalyzes the ADP transfer from ATP to D-glycero-beta-D-manno-heptose 1-phosphate, yielding ADP-D-glycero-beta-D-manno-heptose. The polypeptide is Bifunctional protein HldE (Salmonella agona (strain SL483)).